Consider the following 559-residue polypeptide: (-)-drimenol synthase (559 aa).

D311, D315, D456, S460, and E464 together coordinate Mg(2+). A DDXXD motif motif is present at residues 311–315 (DDIYD).

It belongs to the terpene synthase family. Requires Mg(2+) as cofactor.

It carries out the reaction (2E,6E)-farnesyl diphosphate + H2O = (5S,9S,10S)-drim-7-en-11-ol + diphosphate. It participates in secondary metabolite biosynthesis; terpenoid biosynthesis. Catalyzes the conversion of (2E,6E)-farnesyl diphosphate (FPP) into drimenol, a precursor of the sesquiterpenoid polygodial. Polygodial has been shown to be an antifeedant for a number of herbivorous insects. This chain is (-)-drimenol synthase, found in Persicaria hydropiper (Marshpepper knotweed).